We begin with the raw amino-acid sequence, 164 residues long: Methyl-coenzyme M reductase I operon protein D (164 aa).

MCR is composed of three subunits: alpha, beta, and gamma. The function of proteins C and D is not known.

In Methanocaldococcus jannaschii (strain ATCC 43067 / DSM 2661 / JAL-1 / JCM 10045 / NBRC 100440) (Methanococcus jannaschii), this protein is Methyl-coenzyme M reductase I operon protein D (mcrD).